An 845-amino-acid polypeptide reads, in one-letter code: Putative DEAD-box ATP-dependent RNA helicase 33 (845 aa).

Disordered stretches follow at residues 129–149 (GHPD…PMSP) and 282–302 (KFRK…NEGK). Residues 289-298 (STEEDSDEEG) are compositionally biased toward acidic residues. The Q motif motif lies at 375–403 (KRFDESCISPLTLKALSASGIVKMTRVQD). Positions 406 to 590 (LSECLDGKDA…QLVLKRDHSY (185 aa)) constitute a Helicase ATP-binding domain. An ATP-binding site is contributed by 419 to 426 (AKTGTGKS). The DEAD box signature appears at 538-541 (DEAD). The Helicase C-terminal domain maps to 624–778 (LLKEHINNMP…QVDQSMAKID (155 aa)).

The protein belongs to the DEAD box helicase family.

It carries out the reaction ATP + H2O = ADP + phosphate + H(+). This is Putative DEAD-box ATP-dependent RNA helicase 33 (RH33) from Arabidopsis thaliana (Mouse-ear cress).